Here is a 181-residue protein sequence, read N- to C-terminus: Early upstream open reading frame (181 aa).

It belongs to the EUO family.

This Chlamydia caviae (strain ATCC VR-813 / DSM 19441 / 03DC25 / GPIC) (Chlamydophila caviae) protein is Early upstream open reading frame.